Reading from the N-terminus, the 406-residue chain is MRGSVECTWGWGHCAPSPLLLWTLLLFAAPFGLLGEKTRQVSLEVIPNWLGPLQNLLHIRAVGTNSTLHYVWSSLGPLAVVMVATNTPHSTLSVNWSLLLSPEPDGGLMVLPKDSIQFSSALVFTRLLEFDSTNVSDTAAKPLGRPYPPYSLADFSWNNITDSLDPATLSATFQGHPMNDPTRTFANGSLAFRVQAFSRSSRPAQPPRLLHTADTCQLEVALIGASPRGNRSLFGLEVATLGQGPDCPSMQEQHSIDDEYAPAVFQLDQLLWGSLPSGFAQWRPVAYSQKPGGRESALPCQASPLHPALAYSLPQSPIVRAFFGSQNNFCAFNLTFGASTGPGYWDQHYLSWSMLLGVGFPPVDGLSPLVLGIMAVALGAPGLMLLGGGLVLLLHHKKYSEYQSIN.

The N-terminal stretch at 1–35 (MRGSVECTWGWGHCAPSPLLLWTLLLFAAPFGLLG) is a signal peptide. The Lumenal segment spans residues 36–372 (EKTRQVSLEV…VDGLSPLVLG (337 aa)). 5 N-linked (GlcNAc...) asparagine glycosylation sites follow: Asn-65, Asn-134, Asn-159, Asn-187, and Asn-230. Residues 373 to 393 (IMAVALGAPGLMLLGGGLVLL) form a helical membrane-spanning segment. The Cytoplasmic portion of the chain corresponds to 394 to 406 (LHHKKYSEYQSIN). A Lysosomal targeting motif motif is present at residues 402–406 (YQSIN).

The protein belongs to the GLMP family. Interacts (via lumenal domain) with lysosomal protein MFSD1; the interaction starts while both proteins are still in the endoplasmic reticulum and is required for stabilization of MFSD1 in lysosomes but has no direct effect on its targeting to lysosomes or transporter activity. In terms of processing, highly N-glycosylated. N-glycosylation is essential for GLMP stability and for MFSD1 lysosomal localization.

Its subcellular location is the lysosome membrane. Functionally, required to protect lysosomal transporter MFSD1 from lysosomal proteolysis and for MFSD1 lysosomal localization. The sequence is that of Glycosylated lysosomal membrane protein from Homo sapiens (Human).